The chain runs to 93 residues: MSGLRVYSTSVTGSREIKSQQSEVTRILDGKRIQYQLVDISQDNALRDEMRTLAGNPKATPPQIVNGNHYCGDYELFVEAVEQDTLQEFLKLA.

At serine 2 the chain carries N-acetylserine. One can recognise a Glutaredoxin domain in the interval 2–93 (SGLRVYSTSV…DTLQEFLKLA (92 aa)). Threonine 9 is a glycosylation site (O-linked (GalNAc...) threonine).

This sequence belongs to the SH3BGR family. As to quaternary structure, homodimer. Interacts with MYO1C (via its IQ motifs); the interaction is dependent on calcium and takes place at membrane ruffles. Post-translationally, may be glycosylated.

The protein resides in the cytoplasm. It is found in the cytosol. It localises to the cell projection. The protein localises to the ruffle membrane. Its subcellular location is the nucleus. Could act as a modulator of glutaredoxin biological activity. May play a role in cytoskeleton organization. The chain is SH3 domain-binding glutamic acid-rich-like protein 3 (Sh3bgrl3) from Mus musculus (Mouse).